The chain runs to 790 residues: MASLRSATPRLRSYFRDKYIPQICEALLCGLLVTCPEDPLKYLEHMILAIIKRGLENLLWDTCIHPSLKSRVRRLSETYLDELFGLDDQLVTPELMIKACTFYTGHLVKTHFSGWKKVAIPRANQEEIMAEKMDKAIAHDNFRCQKYIFNRWFAYTVMSRERLITTLLRLRHLFYMQRQRIILAKWKERARHKSKTREDDLISKHELQLKKWKFKLGKPISLEGSLSDIAVENRRIAFDISVLPEQAILQIFLYLTFKDMMACSRVNRSWMAMIQRGSLWNSIDFSTVKNIADKCVVTTLQKWRLNVLRLNFRGCDFRTKTLKAVSHCKNLQELNVSDCQSFTDESMRHISEGCPGVLYLNLSNTTITNRTMRLLPRYFHNLQNLSLAYCRKFTDKGLQYLNLGNGCHKLIYLDLSGCTQVLVEKCPRISSVVLIGSPHISDSAFKALSSCDLKKIRFEGNKRISDACFKSIDRNYPGINHIYMVDCKGLTDSSLKSLSLLKQLTVLNLTNCIRIGDIGLKHFFDGPASIRLRELNLTNCSLLGDSSVIRLSERCPNLHYLNLRNCEHLTDLAIEYIASMLSLISVDLSGTLISNEGMTILSRHRKLREVSVSDCVNITDFGIRAYCKTSLLLEHLDVSYCSQLTDDIIKTIAIFCTRITSLNIAGCPKITDAGMEILSARCHYLHILDISGCIQLTDQIIQDLQIGCKQLRILKMQFCKSISPAAAQKMSSVVQHQEYNSDNPPHWFGYDSEGNPLDKIHSRVQLRTYSKLIVKEPFSIDEEDPDSKHQ.

One can recognise an F-box domain in the interval 237 to 283 (AFDISVLPEQAILQIFLYLTFKDMMACSRVNRSWMAMIQRGSLWNSI). LRR repeat units lie at residues 503 to 525 (QLTV…HFFD), 531 to 552 (RLRE…IRLS), 557 to 579 (NLHY…YIAS), 582 to 602 (SLIS…TILS), 606 to 628 (KLRE…AYCK), and 632 to 657 (LLEH…IFCT).

The protein belongs to the DRC6 family. Component of the nexin-dynein regulatory complex (N-DRC). Directly interacts with SKP1 and CUL1. Interacts with TCTE1/DRC5.

The protein resides in the cytoplasm. It localises to the cytoskeleton. Its subcellular location is the flagellum axoneme. It is found in the microtubule organizing center. The protein localises to the centrosome. In terms of biological role, substrate-recognition component of the SCF (SKP1-CUL1-F-box protein)-type E3 ubiquitin ligase complex. Component of the nexin-dynein regulatory complex (N-DRC), a key regulator of ciliary/flagellar motility which maintains the alignment and integrity of the distal axoneme and regulates microtubule sliding in motile axonemes. Specifically targets CEP192 isoform 3 for ubiquitin-mediated proteolysis and thereby acts as a regulator of microtubule nucleation activity. This is F-box and leucine-rich repeat protein 13 (Fbxl13) from Mus musculus (Mouse).